A 488-amino-acid polypeptide reads, in one-letter code: UDP-GalNAc:beta-1,3-N-acetylgalactosaminyltransferase 2 (488 aa).

Topologically, residues 1-2 (MR) are cytoplasmic. Residues 3 to 23 (HLLLLFLCPCAIGVAFHLWLF) form a helical; Signal-anchor for type II membrane protein membrane-spanning segment. N-linked (GlcNAc...) asparagine glycosylation is found at Asn-24, Asn-105, and Asn-162. Topologically, residues 24-488 (NFSGLFTWFP…CGNPCACEDR (465 aa)) are lumenal.

The protein belongs to the glycosyltransferase 31 family.

Its subcellular location is the golgi apparatus membrane. The protein resides in the endoplasmic reticulum. The enzyme catalyses 3-O-(N-acetyl-beta-D-glucosaminyl-(1-&gt;4)-alpha-D-mannosyl)-L-threonyl-[protein] + UDP-N-acetyl-alpha-D-galactosamine = 3-O-[beta-D-GalNAc-(1-&gt;3)-beta-D-GlcNAc-(1-&gt;4)-alpha-D-Man]-L-Thr-[protein] + UDP + H(+). It participates in protein modification; protein glycosylation. Functionally, beta-1,3-N-acetylgalactosaminyltransferase that synthesizes a unique carbohydrate structure, GalNAc-beta-1-3GlcNAc, on N- and O-glycans. Has no galactose nor galactosaminyl transferase activity toward any acceptor substrate. Involved in alpha-dystroglycan (dag1) glycosylation. The polypeptide is UDP-GalNAc:beta-1,3-N-acetylgalactosaminyltransferase 2 (b3galnt2) (Xenopus tropicalis (Western clawed frog)).